The following is a 317-amino-acid chain: Fruit protein pKIWI502 (317 aa).

The interval 1–29 is disordered; it reads MSITLSRPSLSRPSLSRHPSLTLHSSLSH. In terms of domain architecture, FAD-binding FR-type spans 71 to 182; the sequence is YIWTPVPISR…TQIIGRGFDI (112 aa).

The sequence is that of Fruit protein pKIWI502 from Actinidia deliciosa (Kiwi).